The chain runs to 211 residues: UPF0329 protein ECU07_1880/ECU10_0020 (211 aa).

It belongs to the UPF0329 family.

The chain is UPF0329 protein ECU07_1880/ECU10_0020 from Encephalitozoon cuniculi (strain GB-M1) (Microsporidian parasite).